The sequence spans 602 residues: Leucine-rich repeat-containing protein 40 (602 aa).

The tract at residues 1–22 (MSRLKRIAGQDPRAGFKEGGRD) is disordered. Ser-71 is subject to Phosphoserine. 20 LRR repeats span residues 83–104 (DLTKLIISNNKLQSLTDDLRLL), 106–127 (ALTVLDIHDNQLTSLPSAIREL), 129–150 (NLQKLNVSHNKLKILPEEITNL), 152–173 (NLKCLYLQHNELTCISEGFEQF), 175–196 (NLEDLDLSNNRLTTVPASFSSL), 198–219 (SLVRLNLSSNELKSLPAEINRM), 221–242 (RLKHLDCNSNLLETIPPELAGM), 244–265 (SLELLYLRRNKLRFLPEFPSCS), 266–286 (LLKELHVGENQIEMLEAEHLK), 290–311 (SILVLDLRDNKLKSVPDEIILL), 313–335 (SLERLDLSNNDISSLPYSLGNLH), 336–356 (LKFLALEGNPLRTIRREIINK), 400–421 (TLKILDYSDKQATLIPDEVFDA), 426–447 (IITSINFSKNQLCEIPKRMVEL), 450–472 (MVSDVNLSFNKLSFISLELCVLQ), 473–494 (KLTFLDLRNNFLNSLPEEVESL), 496–517 (RLQTINLSFNRFKMLPEVLYRI), 519–540 (TLETILISNNQVGSVDPQKMKM), 543–564 (NLTTLDLQNNDLLQIPPELGNC), and 566–586 (NLRTLLLDGNPFRVPRAAILM).

The protein is Leucine-rich repeat-containing protein 40 (LRRC40) of Pongo abelii (Sumatran orangutan).